A 292-amino-acid chain; its full sequence is Bifunctional protein FolD 1 (292 aa).

165-167 (GRS) contributes to the NADP(+) binding site.

It belongs to the tetrahydrofolate dehydrogenase/cyclohydrolase family. Homodimer.

It carries out the reaction (6R)-5,10-methylene-5,6,7,8-tetrahydrofolate + NADP(+) = (6R)-5,10-methenyltetrahydrofolate + NADPH. It catalyses the reaction (6R)-5,10-methenyltetrahydrofolate + H2O = (6R)-10-formyltetrahydrofolate + H(+). It functions in the pathway one-carbon metabolism; tetrahydrofolate interconversion. Functionally, catalyzes the oxidation of 5,10-methylenetetrahydrofolate to 5,10-methenyltetrahydrofolate and then the hydrolysis of 5,10-methenyltetrahydrofolate to 10-formyltetrahydrofolate. This is Bifunctional protein FolD 1 from Myxococcus xanthus (strain DK1622).